We begin with the raw amino-acid sequence, 420 residues long: Dynein axonemal assembly factor 4 (420 aa).

The CS domain maps to 3 to 87; that stretch reads VRVSEFSWQQ…KEPVLWESLS (85 aa). The mediates interaction with ESR1 and STUB1 stretch occupies residues 7-103; the sequence is EFSWQQTPAA…EMMQRIREKS (97 aa). Residues 165-192 are compositionally biased toward basic and acidic residues; sequence CQKKADGQKRVQRKEKPLQGKQAEERGA. The disordered stretch occupies residues 165-212; that stretch reads CQKKADGQKRVQRKEKPLQGKQAEERGALKPQSLPRKAPPTRLPTRGR. TPR repeat units lie at residues 288–321, 323–355, and 364–397; these read PDWL…NRKI, VLYL…LTPP, and MKAH…DPAN.

As to quaternary structure, interacts with ZMYND10. Interacts with STUB1. Interacts with ESR1 and ESR2. Interacts with DNAAF2. Interacts with CCT3, CCT4, CCT5 and CCT8. Interacts with DNAAF6/PIH1D3.

It is found in the nucleus. It localises to the cytoplasm. The protein localises to the cell projection. Its subcellular location is the neuron projection. The protein resides in the dynein axonemal particle. In terms of biological role, involved in neuronal migration during development of the cerebral neocortex. May regulate the stability and proteasomal degradation of the estrogen receptors that play an important role in neuronal differentiation, survival and plasticity. Axonemal dynein assembly factor required for ciliary motility. The protein is Dynein axonemal assembly factor 4 of Rattus norvegicus (Rat).